A 734-amino-acid chain; its full sequence is Regulator of G-protein signaling rgs-6 (734 aa).

The tract at residues 1–24 (MSTPCSGNEPATPTNTSPNNETSN) is disordered. The span at 8-24 (NEPATPTNTSPNNETSN) shows a compositional bias: low complexity. Residues 46–157 (IFKKVIRDPV…YDCWPRFLRS (112 aa)) enclose the RGS domain. Disordered stretches follow at residues 162 to 236 (QPSF…SPTH), 489 to 515 (HAVS…YSPA), and 538 to 734 (VNAG…AAYV). Residues 166–176 (TDEELAADDED) are compositionally biased toward acidic residues. Positions 180–191 (HSQPTSLNNTNE) are enriched in polar residues. The segment covering 194–208 (AAAQQSQPAPNAPAA) has biased composition (low complexity). 2 stretches are compositionally biased toward polar residues: residues 494–506 (SDPN…SQDR) and 538–557 (VNAG…SKNR). 2 stretches are compositionally biased toward basic and acidic residues: residues 563–585 (SKTE…RSDD) and 606–619 (TTEE…KSGD). A compositionally biased stretch (low complexity) spans 642–694 (AAAAAAGASPSTSAPSTSTSVQTKTTTSPTKSPTSTTITTSGTTTSATSSVAT). 2 stretches are compositionally biased toward polar residues: residues 705 to 715 (SASTPATSSQL) and 724 to 734 (RESSWQTAAYV).

The chain is Regulator of G-protein signaling rgs-6 from Caenorhabditis elegans.